The following is a 418-amino-acid chain: Serine hydroxymethyltransferase (418 aa).

Residues L121 and 125 to 127 each bind (6S)-5,6,7,8-tetrahydrofolate; that span reads GHL. At K230 the chain carries N6-(pyridoxal phosphate)lysine. Residues E246 and 355–357 contribute to the (6S)-5,6,7,8-tetrahydrofolate site; that span reads SPF.

It belongs to the SHMT family. Homodimer. The cofactor is pyridoxal 5'-phosphate.

It localises to the cytoplasm. The catalysed reaction is (6R)-5,10-methylene-5,6,7,8-tetrahydrofolate + glycine + H2O = (6S)-5,6,7,8-tetrahydrofolate + L-serine. Its pathway is one-carbon metabolism; tetrahydrofolate interconversion. The protein operates within amino-acid biosynthesis; glycine biosynthesis; glycine from L-serine: step 1/1. Catalyzes the reversible interconversion of serine and glycine with tetrahydrofolate (THF) serving as the one-carbon carrier. This reaction serves as the major source of one-carbon groups required for the biosynthesis of purines, thymidylate, methionine, and other important biomolecules. Also exhibits THF-independent aldolase activity toward beta-hydroxyamino acids, producing glycine and aldehydes, via a retro-aldol mechanism. The polypeptide is Serine hydroxymethyltransferase (Streptococcus pneumoniae (strain 70585)).